The following is a 111-amino-acid chain: Ribulose bisphosphate carboxylase small subunit (111 aa).

This sequence belongs to the RuBisCO small chain family. As to quaternary structure, heterohexadecamer of 8 large and 8 small subunits. The CcmM short form purifies from carboxysomes in complex with both RuBisCO subunits; a second complex with full-length CcmM and RuBisCO also includes carbonic anhydrase (CA, ccaA). RuBisCO-CcmM complexes are probably associated with the carboxysome shell. Isolated reduced and oxidized SSUL1 binds holo-RuBisCO (RbcL(8)-RbcS(8)) but not either subunit octamer alone; RuBisCO has a higher affinity for reduced SSUL1.

The protein resides in the carboxysome. Its function is as follows. RuBisCO catalyzes two reactions: the carboxylation of D-ribulose 1,5-bisphosphate, the primary event in carbon dioxide fixation, as well as the oxidative fragmentation of the pentose substrate in the photorespiration process. Both reactions occur simultaneously and in competition at the same active site. Functionally, beta-carboxysome assembly initiates when soluble RuBisCO aggregates is condensed into a liquid matrix in a pre-carboxysome by the RbcS-like domains of probably both CcmM58 and CcmM35. CcmN interacts with the N-terminus of CcmM58, and then recruits the CcmK2 major shell protein via CcmN's encapsulation peptide. Shell formation requires CcmK proteins and CcmO. CcmL caps the otherwise elongated carboxysome. Once fully encapsulated carboxysomes are formed, they migrate within the cell probably via interactions with the cytoskeleton. This chain is Ribulose bisphosphate carboxylase small subunit, found in Synechococcus elongatus (strain ATCC 33912 / PCC 7942 / FACHB-805) (Anacystis nidulans R2).